The chain runs to 87 residues: uncharacterized protein (87 aa).

To A.fulgidus AF_0255 and AF_1348.

This is an uncharacterized protein from Archaeoglobus fulgidus (strain ATCC 49558 / DSM 4304 / JCM 9628 / NBRC 100126 / VC-16).